The primary structure comprises 822 residues: AP-1 complex subunit gamma-1 (822 aa).

The disordered stretch occupies residues Glu-597–Leu-628. One can recognise a GAE domain in the interval Ala-702–Pro-817.

This sequence belongs to the adaptor complexes large subunit family. As to quaternary structure, adaptor protein complex 1 (AP-1) is a heterotetramer composed of two large adaptins (gamma-type subunit AP1G1 and beta-type subunit AP1B1), a medium adaptin (mu-type subunit AP1M1 or AP1M2) and a small adaptin (sigma-type subunit AP1S1 or AP1S2 or AP1S3). Interacts (via GAE domain) with RABEP1. Interacts with EPS15. Interacts with SYNRG/gamma-synergin. Interacts (via GAE domain) with AP1AR (via coiled-coil domain). Interacts with CLN3 (via dileucine motif); this interaction facilitates lysosomal targeting. Interacts (via GAE domain) with AFTPH/aftiphilin; the interaction is required to recruit AFTPH/aftiphilin to the perinuclear region of the cell.

The protein localises to the golgi apparatus. It is found in the cytoplasmic vesicle. It localises to the clathrin-coated vesicle membrane. The protein resides in the cytoplasm. Its subcellular location is the perinuclear region. The protein localises to the clathrin-coated vesicle. It is found in the membrane. It localises to the clathrin-coated pit. Subunit of clathrin-associated adaptor protein complex 1 that plays a role in protein sorting in the late-Golgi/trans-Golgi network (TGN) and/or endosomes. The AP complexes mediate both the recruitment of clathrin to membranes and the recognition of sorting signals within the cytosolic tails of transmembrane cargo molecules. In association with AFTPH/aftiphilin in the aftiphilin/p200/gamma-synergin complex, involved in the trafficking of transferrin from early to recycling endosomes, and the membrane trafficking of furin and the lysosomal enzyme cathepsin D between the trans-Golgi network (TGN) and endosomes. The sequence is that of AP-1 complex subunit gamma-1 (AP1G1) from Pongo abelii (Sumatran orangutan).